The following is a 175-amino-acid chain: UPF0398 protein SUB1405 (175 aa).

The protein belongs to the UPF0398 family.

This Streptococcus uberis (strain ATCC BAA-854 / 0140J) protein is UPF0398 protein SUB1405.